The primary structure comprises 205 residues: Proteasome subunit beta (205 aa).

The propeptide at 1–9 (MNQTENMEG) is removed in mature form; by autocatalysis. Catalysis depends on threonine 10, which acts as the Nucleophile.

The protein belongs to the peptidase T1B family. In terms of assembly, the 20S proteasome core is composed of 14 alpha and 14 beta subunits that assemble into four stacked heptameric rings, resulting in a barrel-shaped structure. The two inner rings, each composed of seven catalytic beta subunits, are sandwiched by two outer rings, each composed of seven alpha subunits. The catalytic chamber with the active sites is on the inside of the barrel. Has a gated structure, the ends of the cylinder being occluded by the N-termini of the alpha-subunits. Is capped at one or both ends by the proteasome regulatory ATPase, PAN.

It is found in the cytoplasm. The enzyme catalyses Cleavage of peptide bonds with very broad specificity.. The formation of the proteasomal ATPase PAN-20S proteasome complex, via the docking of the C-termini of PAN into the intersubunit pockets in the alpha-rings, triggers opening of the gate for substrate entry. Interconversion between the open-gate and close-gate conformations leads to a dynamic regulation of the 20S proteasome proteolysis activity. In terms of biological role, component of the proteasome core, a large protease complex with broad specificity involved in protein degradation. The protein is Proteasome subunit beta of Methanosphaera stadtmanae (strain ATCC 43021 / DSM 3091 / JCM 11832 / MCB-3).